Here is a 473-residue protein sequence, read N- to C-terminus: Lactate utilization protein B (473 aa).

4Fe-4S ferredoxin-type domains are found at residues 302–332 and 351–380; these read GSEF…GHSY and YDDY…LHDL. Residues C311, C314, C317, C321, C364, C367, and C371 each contribute to the [4Fe-4S] cluster site.

Belongs to the LutB/YkgF family.

Is involved in L-lactate degradation and allows cells to grow with lactate as the sole carbon source. Has probably a role as an electron transporter during oxidation of L-lactate. The polypeptide is Lactate utilization protein B (Bacillus cytotoxicus (strain DSM 22905 / CIP 110041 / 391-98 / NVH 391-98)).